Here is a 395-residue protein sequence, read N- to C-terminus: NAD(P)H-quinone oxidoreductase subunit H (395 aa).

This sequence belongs to the complex I 49 kDa subunit family. In terms of assembly, NDH-1 can be composed of about 15 different subunits; different subcomplexes with different compositions have been identified which probably have different functions.

It is found in the cellular thylakoid membrane. It catalyses the reaction a plastoquinone + NADH + (n+1) H(+)(in) = a plastoquinol + NAD(+) + n H(+)(out). The catalysed reaction is a plastoquinone + NADPH + (n+1) H(+)(in) = a plastoquinol + NADP(+) + n H(+)(out). NDH-1 shuttles electrons from an unknown electron donor, via FMN and iron-sulfur (Fe-S) centers, to quinones in the respiratory and/or the photosynthetic chain. The immediate electron acceptor for the enzyme in this species is believed to be plastoquinone. Couples the redox reaction to proton translocation, and thus conserves the redox energy in a proton gradient. Cyanobacterial NDH-1 also plays a role in inorganic carbon-concentration. The sequence is that of NAD(P)H-quinone oxidoreductase subunit H from Prochlorococcus marinus (strain MIT 9515).